The sequence spans 98 residues: NADH-ubiquinone oxidoreductase chain 4L (98 aa).

The next 3 helical transmembrane spans lie at 1-21 (MTPT…GMLT), 27-47 (VASL…ATLI), and 61-81 (IILL…LISI).

It belongs to the complex I subunit 4L family. As to quaternary structure, core subunit of respiratory chain NADH dehydrogenase (Complex I) which is composed of 45 different subunits.

It localises to the mitochondrion inner membrane. It catalyses the reaction a ubiquinone + NADH + 5 H(+)(in) = a ubiquinol + NAD(+) + 4 H(+)(out). Its function is as follows. Core subunit of the mitochondrial membrane respiratory chain NADH dehydrogenase (Complex I) which catalyzes electron transfer from NADH through the respiratory chain, using ubiquinone as an electron acceptor. Part of the enzyme membrane arm which is embedded in the lipid bilayer and involved in proton translocation. The protein is NADH-ubiquinone oxidoreductase chain 4L (MT-ND4L) of Macaca fascicularis (Crab-eating macaque).